Consider the following 329-residue polypeptide: Beta-ketoacyl-[acyl-carrier-protein] synthase III (329 aa).

Catalysis depends on residues C123 and H256. Positions 257 to 261 (QANIR) are ACP-binding. Residue N286 is part of the active site.

This sequence belongs to the thiolase-like superfamily. FabH family. Homodimer.

It is found in the cytoplasm. The catalysed reaction is malonyl-[ACP] + acetyl-CoA + H(+) = 3-oxobutanoyl-[ACP] + CO2 + CoA. It participates in lipid metabolism; fatty acid biosynthesis. Catalyzes the condensation reaction of fatty acid synthesis by the addition to an acyl acceptor of two carbons from malonyl-ACP. Catalyzes the first condensation reaction which initiates fatty acid synthesis and may therefore play a role in governing the total rate of fatty acid production. Possesses both acetoacetyl-ACP synthase and acetyl transacylase activities. Its substrate specificity determines the biosynthesis of branched-chain and/or straight-chain of fatty acids. This is Beta-ketoacyl-[acyl-carrier-protein] synthase III from Burkholderia lata (strain ATCC 17760 / DSM 23089 / LMG 22485 / NCIMB 9086 / R18194 / 383).